Reading from the N-terminus, the 80-residue chain is Three-finger toxin MALT0059C (80 aa).

The N-terminal stretch at 1-21 is a signal peptide; that stretch reads MRTLLLTLVVVTIVCLDLGNS. 4 cysteine pairs are disulfide-bonded: Cys-24/Cys-41, Cys-35/Cys-60, Cys-64/Cys-72, and Cys-73/Cys-78.

This sequence belongs to the three-finger toxin family. Short-chain subfamily. Expressed by the venom gland.

It is found in the secreted. Neurotoxin. Blocks muscular nicotinic acetylcholine receptors (nAChR). In Micrurus altirostris (Uruguayan coral snake), this protein is Three-finger toxin MALT0059C.